The chain runs to 334 residues: Tryptophan--tRNA ligase (334 aa).

ATP-binding positions include 11 to 13 and 19 to 20; these read QPS and GN. The short motif at 12–20 is the 'HIGH' region element; that stretch reads PSGELTIGN. Asp135 serves as a coordination point for L-tryptophan. Residues 147-149, Ile186, and 195-199 each bind ATP; these read GDD and KMSKS. The 'KMSKS' region signature appears at 195 to 199; the sequence is KMSKS.

This sequence belongs to the class-I aminoacyl-tRNA synthetase family. As to quaternary structure, homodimer.

It localises to the cytoplasm. The catalysed reaction is tRNA(Trp) + L-tryptophan + ATP = L-tryptophyl-tRNA(Trp) + AMP + diphosphate + H(+). Its function is as follows. Catalyzes the attachment of tryptophan to tRNA(Trp). The protein is Tryptophan--tRNA ligase of Haemophilus influenzae (strain ATCC 51907 / DSM 11121 / KW20 / Rd).